Reading from the N-terminus, the 71-residue chain is Protein SlyX homolog (71 aa).

This sequence belongs to the SlyX family.

In Rhodospirillum rubrum (strain ATCC 11170 / ATH 1.1.1 / DSM 467 / LMG 4362 / NCIMB 8255 / S1), this protein is Protein SlyX homolog.